Here is a 170-residue protein sequence, read N- to C-terminus: uncharacterized protein (170 aa).

The VOC domain occupies 25–151 (PALSPHLVVD…FGHHWSLGQP (127 aa)).

This is an uncharacterized protein from Mycobacterium tuberculosis (strain CDC 1551 / Oshkosh).